The chain runs to 154 residues: MRILGIDPGLARVGYGVIETAGREQTMLDCGIIRTDSGRPEGERMVEIARDLRQLIRAWKPELAAVEKFFFYRSSNTIAVVQARGVVIMTLSRFGLPIVEFPPMQIKQALTGHGHADKDEVLEAVMRELSLETPPRPDDAADALAVALTGWFQR.

Active-site residues include aspartate 7, glutamate 67, and aspartate 139. Positions 7, 67, and 139 each coordinate Mg(2+).

Belongs to the RuvC family. Homodimer which binds Holliday junction (HJ) DNA. The HJ becomes 2-fold symmetrical on binding to RuvC with unstacked arms; it has a different conformation from HJ DNA in complex with RuvA. In the full resolvosome a probable DNA-RuvA(4)-RuvB(12)-RuvC(2) complex forms which resolves the HJ. It depends on Mg(2+) as a cofactor.

The protein resides in the cytoplasm. It catalyses the reaction Endonucleolytic cleavage at a junction such as a reciprocal single-stranded crossover between two homologous DNA duplexes (Holliday junction).. Its function is as follows. The RuvA-RuvB-RuvC complex processes Holliday junction (HJ) DNA during genetic recombination and DNA repair. Endonuclease that resolves HJ intermediates. Cleaves cruciform DNA by making single-stranded nicks across the HJ at symmetrical positions within the homologous arms, yielding a 5'-phosphate and a 3'-hydroxyl group; requires a central core of homology in the junction. The consensus cleavage sequence is 5'-(A/T)TT(C/G)-3'. Cleavage occurs on the 3'-side of the TT dinucleotide at the point of strand exchange. HJ branch migration catalyzed by RuvA-RuvB allows RuvC to scan DNA until it finds its consensus sequence, where it cleaves and resolves the cruciform DNA. This Synechococcus sp. (strain WH7803) protein is Crossover junction endodeoxyribonuclease RuvC.